The primary structure comprises 228 residues: Cytochrome c oxidase subunit 2 (228 aa).

The Mitochondrial intermembrane portion of the chain corresponds to 1 to 26 (MATWANLGLQNSSSPLMEQLNFFHDH). The chain crosses the membrane as a helical span at residues 27–48 (TLLILIMITVMIAYIMFMLFFN). Topologically, residues 49–62 (KFTNRYLLHGQTIE) are mitochondrial matrix. Residues 63-82 (IIWTILPAIILMFIAFPSLR) form a helical membrane-spanning segment. Residues 83 to 228 (LLYLMDEINS…FIKWISSQMN (146 aa)) are Mitochondrial intermembrane-facing. Residues His-161, Cys-196, Glu-198, Cys-200, His-204, and Met-207 each contribute to the Cu cation site. Residue Glu-198 coordinates Mg(2+).

This sequence belongs to the cytochrome c oxidase subunit 2 family. As to quaternary structure, component of the cytochrome c oxidase (complex IV, CIV), a multisubunit enzyme composed of a catalytic core of 3 subunits and several supernumerary subunits. The complex exists as a monomer or a dimer and forms supercomplexes (SCs) in the inner mitochondrial membrane with ubiquinol-cytochrome c oxidoreductase (cytochrome b-c1 complex, complex III, CIII). Cu cation is required as a cofactor.

It is found in the mitochondrion inner membrane. It carries out the reaction 4 Fe(II)-[cytochrome c] + O2 + 8 H(+)(in) = 4 Fe(III)-[cytochrome c] + 2 H2O + 4 H(+)(out). Its function is as follows. Component of the cytochrome c oxidase, the last enzyme in the mitochondrial electron transport chain which drives oxidative phosphorylation. The respiratory chain contains 3 multisubunit complexes succinate dehydrogenase (complex II, CII), ubiquinol-cytochrome c oxidoreductase (cytochrome b-c1 complex, complex III, CIII) and cytochrome c oxidase (complex IV, CIV), that cooperate to transfer electrons derived from NADH and succinate to molecular oxygen, creating an electrochemical gradient over the inner membrane that drives transmembrane transport and the ATP synthase. Cytochrome c oxidase is the component of the respiratory chain that catalyzes the reduction of oxygen to water. Electrons originating from reduced cytochrome c in the intermembrane space (IMS) are transferred via the dinuclear copper A center (CU(A)) of subunit 2 and heme A of subunit 1 to the active site in subunit 1, a binuclear center (BNC) formed by heme A3 and copper B (CU(B)). The BNC reduces molecular oxygen to 2 water molecules using 4 electrons from cytochrome c in the IMS and 4 protons from the mitochondrial matrix. This chain is Cytochrome c oxidase subunit 2 (COII), found in Aedes aegypti (Yellowfever mosquito).